The primary structure comprises 408 residues: Collagen and calcium-binding EGF domain-containing protein 1 (408 aa).

A signal peptide spans 1–35 (MVPPPLPSRGGAAKRQLGKSLGPLLLLLALGHTWT). The region spanning 135-176 (DIDECATSNTTLCAHICINTMGSYHCECREGYILEDDGRTCT) is the EGF-like; calcium-binding domain. 3 disulfides stabilise this stretch: C139–C151, C147–C160, and C162–C175. N143 carries N-linked (GlcNAc...) asparagine glycosylation. N-linked (GlcNAc...) asparagine glycosylation occurs at N183. 2 disordered regions span residues 246–335 (YLPG…GPPG) and 361–408 (HRTH…NFYP). 2 Collagen-like domains span residues 247–292 (LPGP…PMGP) and 302–335 (GRRGPVGPPGAPGRHGSKGERGAPGPPGSPGPPG). The span at 272–281 (PGMPGPPGQP) shows a compositional bias: pro residues. A compositionally biased stretch (low complexity) spans 283–294 (PRGSMGPMGPSP). Over residues 325 to 334 (PGPPGSPGPP) the composition is skewed to pro residues. A glycan (O-linked (Xyl...) (chondroitin sulfate) serine) is linked at S387. A compositionally biased stretch (basic and acidic residues) spans 390–402 (DYSRRTEARDPEA).

Belongs to the CCBE1 family.

The protein localises to the secreted. Its function is as follows. Required for lymphangioblast budding and angiogenic sprouting from venous endothelium during embryogenesis. The chain is Collagen and calcium-binding EGF domain-containing protein 1 (Ccbe1) from Mus musculus (Mouse).